A 299-amino-acid chain; its full sequence is Oxygen-dependent coproporphyrinogen-III oxidase (299 aa).

Substrate is bound at residue Ser92. 2 residues coordinate Mn(2+): His96 and His106. Residue His106 is the Proton donor of the active site. Substrate is bound at residue 108-110; sequence NVR. Residues His145 and His175 each coordinate Mn(2+). Positions 240-275 are important for dimerization; the sequence is YVEFNLVWDRGTLFGLQTGGRTESILMSMPPLVRWE. Residue 258-260 participates in substrate binding; it reads GGR.

The protein belongs to the aerobic coproporphyrinogen-III oxidase family. In terms of assembly, homodimer. The cofactor is Mn(2+).

It localises to the cytoplasm. The catalysed reaction is coproporphyrinogen III + O2 + 2 H(+) = protoporphyrinogen IX + 2 CO2 + 2 H2O. It participates in porphyrin-containing compound metabolism; protoporphyrin-IX biosynthesis; protoporphyrinogen-IX from coproporphyrinogen-III (O2 route): step 1/1. In terms of biological role, involved in the heme biosynthesis. Catalyzes the aerobic oxidative decarboxylation of propionate groups of rings A and B of coproporphyrinogen-III to yield the vinyl groups in protoporphyrinogen-IX. This chain is Oxygen-dependent coproporphyrinogen-III oxidase, found in Escherichia coli (strain SE11).